Reading from the N-terminus, the 465-residue chain is ATP synthase subunit beta (465 aa).

Position 149-156 (149-156 (GGAGVGKT)) interacts with ATP.

The protein belongs to the ATPase alpha/beta chains family. F-type ATPases have 2 components, CF(1) - the catalytic core - and CF(0) - the membrane proton channel. CF(1) has five subunits: alpha(3), beta(3), gamma(1), delta(1), epsilon(1). CF(0) has three main subunits: a(1), b(2) and c(9-12). The alpha and beta chains form an alternating ring which encloses part of the gamma chain. CF(1) is attached to CF(0) by a central stalk formed by the gamma and epsilon chains, while a peripheral stalk is formed by the delta and b chains.

Its subcellular location is the cell inner membrane. It catalyses the reaction ATP + H2O + 4 H(+)(in) = ADP + phosphate + 5 H(+)(out). Its function is as follows. Produces ATP from ADP in the presence of a proton gradient across the membrane. The catalytic sites are hosted primarily by the beta subunits. The protein is ATP synthase subunit beta of Dictyoglomus turgidum (strain DSM 6724 / Z-1310).